We begin with the raw amino-acid sequence, 103 residues long: Pyrimidine/purine nucleoside phosphorylase (103 aa).

The protein belongs to the nucleoside phosphorylase PpnP family.

It carries out the reaction a purine D-ribonucleoside + phosphate = a purine nucleobase + alpha-D-ribose 1-phosphate. The catalysed reaction is adenosine + phosphate = alpha-D-ribose 1-phosphate + adenine. It catalyses the reaction cytidine + phosphate = cytosine + alpha-D-ribose 1-phosphate. The enzyme catalyses guanosine + phosphate = alpha-D-ribose 1-phosphate + guanine. It carries out the reaction inosine + phosphate = alpha-D-ribose 1-phosphate + hypoxanthine. The catalysed reaction is thymidine + phosphate = 2-deoxy-alpha-D-ribose 1-phosphate + thymine. It catalyses the reaction uridine + phosphate = alpha-D-ribose 1-phosphate + uracil. The enzyme catalyses xanthosine + phosphate = alpha-D-ribose 1-phosphate + xanthine. Functionally, catalyzes the phosphorolysis of diverse nucleosides, yielding D-ribose 1-phosphate and the respective free bases. Can use uridine, adenosine, guanosine, cytidine, thymidine, inosine and xanthosine as substrates. Also catalyzes the reverse reactions. The protein is Pyrimidine/purine nucleoside phosphorylase of Chlorobium chlorochromatii (strain CaD3).